A 201-amino-acid polypeptide reads, in one-letter code: UPF0301 protein RHA1_ro03630 (201 aa).

The protein belongs to the UPF0301 (AlgH) family.

This is UPF0301 protein RHA1_ro03630 from Rhodococcus jostii (strain RHA1).